The chain runs to 134 residues: Interleukin-5 (134 aa).

An N-terminal signal peptide occupies residues 1-21 (MRMHLHLTLVALGAAYVCANA). Residues Asn-76 and Asn-90 are each glycosylated (N-linked (GlcNAc...) asparagine).

It belongs to the IL-5 family. As to quaternary structure, homodimer; disulfide-linked. Interacts with IL5RA. Interacts with CSF2RB.

It localises to the secreted. Its function is as follows. Homodimeric cytokine expressed predominantly by T-lymphocytes and NK cells that plays an important role in the survival, differentiation, and chemotaxis of eosinophils. Also acts on activated and resting B-cells to induce immunoglobulin production, growth, and differentiation. Mechanistically, exerts its biological effects through a receptor composed of IL5RA subunit and the cytokine receptor common subunit beta/CSF2RB. Binding to the receptor leads to activation of various kinases including LYN, SYK and JAK2 and thereby propagates signals through the RAS-MAPK and JAK-STAT5 pathways respectively. The chain is Interleukin-5 (IL5) from Bos taurus (Bovine).